Reading from the N-terminus, the 111-residue chain is Cytochrome b-c1 complex subunit 7 (111 aa).

An N-acetylalanine modification is found at A2. Residue K12 is modified to N6-acetyllysine; alternate. K12 carries the N6-succinyllysine; alternate modification. Position 19 is an N6-acetyllysine (K19). K78 bears the N6-acetyllysine; alternate mark. Position 78 is an N6-succinyllysine; alternate (K78). At K83 the chain carries N6-acetyllysine. An N6-acetyllysine; alternate modification is found at K88. The residue at position 88 (K88) is an N6-succinyllysine; alternate. K96 is subject to N6-acetyllysine.

This sequence belongs to the UQCRB/QCR7 family. Component of the ubiquinol-cytochrome c oxidoreductase (cytochrome b-c1 complex, complex III, CIII), a multisubunit enzyme composed of 11 subunits. The complex is composed of 3 respiratory subunits cytochrome b, cytochrome c1 and Rieske protein UQCRFS1, 2 core protein subunits UQCRC1/QCR1 and UQCRC2/QCR2, and 6 low-molecular weight protein subunits UQCRH/QCR6, UQCRB/QCR7, UQCRQ/QCR8, UQCR10/QCR9, UQCR11/QCR10 and subunit 9, the cleavage product of Rieske protein UQCRFS1. The complex exists as an obligatory dimer and forms supercomplexes (SCs) in the inner mitochondrial membrane with NADH-ubiquinone oxidoreductase (complex I, CI) and cytochrome c oxidase (complex IV, CIV), resulting in different assemblies (supercomplex SCI(1)III(2)IV(1) and megacomplex MCI(2)III(2)IV(2)).

Its subcellular location is the mitochondrion inner membrane. Functionally, component of the ubiquinol-cytochrome c oxidoreductase, a multisubunit transmembrane complex that is part of the mitochondrial electron transport chain which drives oxidative phosphorylation. The respiratory chain contains 3 multisubunit complexes succinate dehydrogenase (complex II, CII), ubiquinol-cytochrome c oxidoreductase (cytochrome b-c1 complex, complex III, CIII) and cytochrome c oxidase (complex IV, CIV), that cooperate to transfer electrons derived from NADH and succinate to molecular oxygen, creating an electrochemical gradient over the inner membrane that drives transmembrane transport and the ATP synthase. The cytochrome b-c1 complex catalyzes electron transfer from ubiquinol to cytochrome c, linking this redox reaction to translocation of protons across the mitochondrial inner membrane, with protons being carried across the membrane as hydrogens on the quinol. In the process called Q cycle, 2 protons are consumed from the matrix, 4 protons are released into the intermembrane space and 2 electrons are passed to cytochrome c. The polypeptide is Cytochrome b-c1 complex subunit 7 (Uqcrb) (Mus musculus (Mouse)).